The chain runs to 158 residues: MFLNKKYPSLIEKKMDDLMTLKFCYLIITFLIITNIFSLAINIWGGGDMIDRQSCENIFYCPKDWVGYNNACYYFSNNNKNYTDANNYCKNSHNSTLANNDTKLLNLTKLLNLSKLYYNDSTYWVKYSLPKNKAVTLRNSTYKYDRVKYTETFFICSN.

At 1-26 (MFLNKKYPSLIEKKMDDLMTLKFCYL) the chain is on the cytoplasmic side. Residues 27–47 (IITFLIITNIFSLAINIWGGG) form a helical membrane-spanning segment. The Extracellular segment spans residues 48 to 158 (DMIDRQSCEN…YTETFFICSN (111 aa)). A disulfide bridge links cysteine 61 with cysteine 72. Positions 61–157 (CPKDWVGYNN…KYTETFFICS (97 aa)) are lectin-like. N-linked (GlcNAc...) asparagine; by host glycans are attached at residues asparagine 81, asparagine 94, asparagine 100, asparagine 106, asparagine 112, asparagine 119, and asparagine 139.

This sequence belongs to the asfivirus lectin-like protein family. Homodimer.

Its subcellular location is the host endoplasmic reticulum membrane. In terms of biological role, down-regulates MHC-I expression by impairing the appropriate configuration or presentation into the plasma membrane of the latter. Participates in viral hemadsorption, which may help viral spread. Reduces the transactivating activity of host TP53, thus inhibiting apoptosis. Non-essential for virus growth in swine macrophage cell cultures. The polypeptide is Lectin-like protein EP153R (African swine fever virus (isolate Pig/Kenya/KEN-50/1950) (ASFV)).